Consider the following 245-residue polypeptide: 1-(5-phosphoribosyl)-5-[(5-phosphoribosylamino)methylideneamino] imidazole-4-carboxamide isomerase (245 aa).

D7 serves as the catalytic Proton acceptor. D129 acts as the Proton donor in catalysis.

This sequence belongs to the HisA/HisF family.

The protein resides in the cytoplasm. It carries out the reaction 1-(5-phospho-beta-D-ribosyl)-5-[(5-phospho-beta-D-ribosylamino)methylideneamino]imidazole-4-carboxamide = 5-[(5-phospho-1-deoxy-D-ribulos-1-ylimino)methylamino]-1-(5-phospho-beta-D-ribosyl)imidazole-4-carboxamide. It functions in the pathway amino-acid biosynthesis; L-histidine biosynthesis; L-histidine from 5-phospho-alpha-D-ribose 1-diphosphate: step 4/9. This is 1-(5-phosphoribosyl)-5-[(5-phosphoribosylamino)methylideneamino] imidazole-4-carboxamide isomerase from Cronobacter sakazakii (strain ATCC BAA-894) (Enterobacter sakazakii).